Consider the following 293-residue polypeptide: Nucleotide-binding protein HRM2_27900 (293 aa).

11-18 (GLSGSGKS) is a binding site for ATP. Residue 62–65 (DIRA) participates in GTP binding.

It belongs to the RapZ-like family.

In terms of biological role, displays ATPase and GTPase activities. This Desulforapulum autotrophicum (strain ATCC 43914 / DSM 3382 / VKM B-1955 / HRM2) (Desulfobacterium autotrophicum) protein is Nucleotide-binding protein HRM2_27900.